We begin with the raw amino-acid sequence, 293 residues long: Phosphatidylserine decarboxylase proenzyme (293 aa).

Residues aspartate 90, histidine 147, and serine 254 each act as charge relay system; for autoendoproteolytic cleavage activity in the active site. The Schiff-base intermediate with substrate; via pyruvic acid; for decarboxylase activity role is filled by serine 254. Pyruvic acid (Ser); by autocatalysis is present on serine 254.

It belongs to the phosphatidylserine decarboxylase family. PSD-B subfamily. Prokaryotic type I sub-subfamily. In terms of assembly, heterodimer of a large membrane-associated beta subunit and a small pyruvoyl-containing alpha subunit. Requires pyruvate as cofactor. In terms of processing, is synthesized initially as an inactive proenzyme. Formation of the active enzyme involves a self-maturation process in which the active site pyruvoyl group is generated from an internal serine residue via an autocatalytic post-translational modification. Two non-identical subunits are generated from the proenzyme in this reaction, and the pyruvate is formed at the N-terminus of the alpha chain, which is derived from the carboxyl end of the proenzyme. The autoendoproteolytic cleavage occurs by a canonical serine protease mechanism, in which the side chain hydroxyl group of the serine supplies its oxygen atom to form the C-terminus of the beta chain, while the remainder of the serine residue undergoes an oxidative deamination to produce ammonia and the pyruvoyl prosthetic group on the alpha chain. During this reaction, the Ser that is part of the protease active site of the proenzyme becomes the pyruvoyl prosthetic group, which constitutes an essential element of the active site of the mature decarboxylase.

Its subcellular location is the cell membrane. It carries out the reaction a 1,2-diacyl-sn-glycero-3-phospho-L-serine + H(+) = a 1,2-diacyl-sn-glycero-3-phosphoethanolamine + CO2. It participates in phospholipid metabolism; phosphatidylethanolamine biosynthesis; phosphatidylethanolamine from CDP-diacylglycerol: step 2/2. Catalyzes the formation of phosphatidylethanolamine (PtdEtn) from phosphatidylserine (PtdSer). In Yersinia pseudotuberculosis serotype O:1b (strain IP 31758), this protein is Phosphatidylserine decarboxylase proenzyme.